The sequence spans 127 residues: Large ribosomal subunit protein uL22 (127 aa).

The protein belongs to the universal ribosomal protein uL22 family. Part of the 50S ribosomal subunit.

This protein binds specifically to 23S rRNA; its binding is stimulated by other ribosomal proteins, e.g. L4, L17, and L20. It is important during the early stages of 50S assembly. It makes multiple contacts with different domains of the 23S rRNA in the assembled 50S subunit and ribosome. Its function is as follows. The globular domain of the protein is located near the polypeptide exit tunnel on the outside of the subunit, while an extended beta-hairpin is found that lines the wall of the exit tunnel in the center of the 70S ribosome. The protein is Large ribosomal subunit protein uL22 of Methylorubrum extorquens (strain CM4 / NCIMB 13688) (Methylobacterium extorquens).